The sequence spans 303 residues: Uridine diphosphate glucose pyrophosphatase NUDT22 (303 aa).

Substrate-binding residues include phenylalanine 56, tyrosine 87, arginine 139, alanine 144, aspartate 151, histidine 156, and glutamate 158. The 168-residue stretch at 118–285 folds into the Nudix hydrolase domain; the sequence is ADPLGVGAAL…KGAIILYNRV (168 aa). Positions 148 to 168 are disordered; that stretch reads GLVDVPGGHPEPQALCPGGSP. Residues 175-196 carry the Nudix box motif; that stretch reads GQLVVHELFSSVLQEICDEVNL. Residues glutamate 189 and glutamate 193 each contribute to the Mg(2+) site. Serine 274 serves as a coordination point for substrate.

The protein belongs to the Nudix hydrolase family. Mg(2+) serves as cofactor.

The enzyme catalyses UDP-sugar + H2O = UMP + alpha-D-aldose 1-phosphate.. In terms of biological role, hydrolyzes UDP-glucose to glucose 1-phosphate and UMP and UDP-galactose to galactose 1-phosphate and UMP. Preferred substrate is UDP-glucose. The sequence is that of Uridine diphosphate glucose pyrophosphatase NUDT22 (NUDT22) from Homo sapiens (Human).